We begin with the raw amino-acid sequence, 98 residues long: Large ribosomal subunit protein eL14 (98 aa).

It belongs to the eukaryotic ribosomal protein eL14 family.

The chain is Large ribosomal subunit protein eL14 from Thermofilum pendens (strain DSM 2475 / Hrk 5).